A 556-amino-acid polypeptide reads, in one-letter code: MESMVAPGEVLMSQAIQPAHADSRGELSAGQLLKWMDTTACLAAEKHAGISCVTASMDDILFEDTARIGQIITIRAKVTRAFSTSMEISIKVIVQDKFTGIQKLLCVAFSTFVAKPVGKEKVHLKPVLLQTEQEQVEHNLASERRKVRLQHENTFNNIMKESSRFSDSICNEEEGTATTMGTSVQSIELVLPPHANHHGNTFGGQIMAWMETVATISASRLCHGHPFLKSVDMFKFRGPSTVGDRLVFSAIVNNTFQNSVEVGVRVEAFDCQEWAEGQGRHINSAFLIYNAVDDQEKLITFPRIQPISKDDFRRYQGAIARRRIRLGRKYVISHKKEVPLSAQWDISKKGSLSNTNVEALKNLASKSGWEITTTLEKIKIYTLEEQDAISVKVEKLVGSPAHIAYHLLSDLTKRPLWDPHYISCEVIDQVSEDDQIYYITCSVVNGDKPKDFVVLVSRRKPLKDNNTYTVALRSVVLPSVPSSPQYIRSEVICAGFLIQAVDSNSCTVTYLNQMSDSILPYFAGNIGGWSKSIEEAAASCIKFIENATPDGLKSVL.

A HotDog ACOT-type 1 domain is found at 6–118 (APGEVLMSQA…FSTFVAKPVG (113 aa)). The residue at position 34 (lysine 34) is an N6-succinyllysine. Residues 54-56 (TAS) and 83-85 (STS) contribute to the CoA site. Lysine 97 carries the N6-succinyllysine modification. Residue arginine 145 participates in CoA binding. Residues lysine 160 and lysine 229 each carry the N6-succinyllysine modification. The region spanning 180–295 (MGTSVQSIEL…FLIYNAVDDQ (116 aa)) is the HotDog ACOT-type 2 domain. 235–237 (KFR) is a binding site for CoA. The 210-residue stretch at 327–536 (GRKYVISHKK…GGWSKSIEEA (210 aa)) folds into the START domain.

Homodimer or homotetramer.

It is found in the cytoplasm. It localises to the cytosol. It carries out the reaction acetyl-CoA + H2O = acetate + CoA + H(+). It catalyses the reaction butanoyl-CoA + H2O = butanoate + CoA + H(+). The enzyme catalyses hexanoyl-CoA + H2O = hexanoate + CoA + H(+). Its pathway is lipid metabolism; fatty acid metabolism. Its activity is regulated as follows. Allosterically regulated by ATP (activator) and ADP (inhibitor). Cold labile, it dissociates into inactive monomers at low temperature. In terms of biological role, catalyzes the hydrolysis of acyl-CoAs into free fatty acids and coenzyme A (CoASH), regulating their respective intracellular levels. Preferentially hydrolyzes acetyl-CoA. The polypeptide is Acetyl-coenzyme A thioesterase (Acot12) (Mus musculus (Mouse)).